A 170-amino-acid chain; its full sequence is dCTP pyrophosphatase 1 (170 aa).

Residues 1–25 are disordered; sequence MSTAGDGERGTVGQEDSAAARPFRF. S2 is modified (N-acetylserine). S2 is subject to Phosphoserine. Substrate contacts are provided by residues H38 and 47 to 51; that span reads WEQFH. Mg(2+)-binding residues include E63 and E66. W73 lines the substrate pocket. Mg(2+) contacts are provided by E95 and D98. Y102 is a substrate binding site. The disordered stretch occupies residues 150-170; the sequence is SENQAVGAGDPASELRDQAST.

As to quaternary structure, homotetramer. Mg(2+) serves as cofactor. Ubiquitous. Highly expressed in heart, liver, skeletal muscle, cerebellum, brain, and salivary gland.

Its subcellular location is the cytoplasm. It is found in the cytosol. The enzyme catalyses dCTP + H2O = dCMP + diphosphate + H(+). Its activity is regulated as follows. Inhibited by divalent calcium or cadmium ions. Functionally, hydrolyzes deoxynucleoside triphosphates (dNTPs) to the corresponding nucleoside monophosphates. Has a strong preference for dCTP and its analogs including 5-iodo-dCTP and 5-methyl-dCTP for which it may even have a higher efficiency. May protect DNA or RNA against the incorporation of these genotoxic nucleotide analogs through their catabolism. The protein is dCTP pyrophosphatase 1 of Mus musculus (Mouse).